Reading from the N-terminus, the 186-residue chain is Large ribosomal subunit protein uL5c (186 aa).

Belongs to the universal ribosomal protein uL5 family. Part of the 50S ribosomal subunit; contacts the 5S rRNA.

It is found in the plastid. The protein resides in the chloroplast. In terms of biological role, binds 5S rRNA, forms part of the central protuberance of the 50S subunit. The sequence is that of Large ribosomal subunit protein uL5c (rpl5) from Chaetosphaeridium globosum (Charophycean green alga).